The following is a 298-amino-acid chain: Super small secreted glycoprotein (298 aa).

The first 32 residues, 1–32, serve as a signal peptide directing secretion; that stretch reads MGVTGILQLPRDRFKRTSFFLWVIILFQRTFS. An N-linked (GlcNAc...) asparagine; by host glycan is attached at Asn-40. 2 disulfide bridges follow: Cys-108–Cys-135 and Cys-121–Cys-147. 5 N-linked (GlcNAc...) asparagine; by host glycosylation sites follow: Asn-204, Asn-228, Asn-238, Asn-257, and Asn-268.

The protein belongs to the filoviruses glycoprotein family.

The protein resides in the secreted. The sequence is that of Super small secreted glycoprotein (GP) from Epomops franqueti (Franquet's epauletted fruit bat).